The following is a 547-amino-acid chain: Putative laccase-5 (547 aa).

A signal peptide spans 1–35 (MGTPRGLRNAGSSSSACRFLAAFAVLLALPTLTAG). 2 consecutive Plastocyanin-like domains span residues 43 to 159 (NVQM…PKRG) and 170 to 323 (ELPP…YAPT). Residues N48 and N89 are each glycosylated (N-linked (GlcNAc...) asparagine). Positions 93, 95, 138, and 140 each coordinate Cu cation. N-linked (GlcNAc...) asparagine glycosylation is found at N199, N215, N251, N311, N342, N349, N388, N395, N405, and N430. The Plastocyanin-like 3 domain occupies 408–531 (FVRPRVALLE…SMAWLVNDGP (124 aa)). Cu cation-binding residues include H448, H451, H453, H510, C511, H512, and H516.

Belongs to the multicopper oxidase family. It depends on Cu cation as a cofactor.

It localises to the secreted. It is found in the extracellular space. The protein resides in the apoplast. It catalyses the reaction 4 hydroquinone + O2 = 4 benzosemiquinone + 2 H2O. In terms of biological role, lignin degradation and detoxification of lignin-derived products. This chain is Putative laccase-5 (LAC5), found in Oryza sativa subsp. japonica (Rice).